A 547-amino-acid polypeptide reads, in one-letter code: Varicidin biosynthesis cluster MFS-type transporer (547 aa).

Over residues 1 to 17 the composition is skewed to polar residues; it reads MTTSTSKNAISKSSQED. Residues 1–33 are disordered; that stretch reads MTTSTSKNAISKSSQEDLCSDTKDKGSSGGGNE. 11 consecutive transmembrane segments (helical) span residues 47-67, 156-176, 183-203, 224-244, 252-272, 296-316, 330-350, 360-382, 392-412, 422-442, and 503-523; these read LVLL…VCIS, LAPS…SVFT, WCFW…FLFV, ALGT…LQWG, SWRV…WLYV, ILFT…VPIW, INFL…GTLV, GQWR…WRYN, AGTL…PFIA, ISLG…VFLA, and CFLV…GMEW.

Belongs to the major facilitator superfamily. TCR/Tet family.

It localises to the cell membrane. MFS-type transporer; part of the gene cluster that mediates the biosynthesis of varicidin A, an antifungal natural product containing a cis-octahydrodecalin core. In Talaromyces variabilis (Penicillium variabile), this protein is Varicidin biosynthesis cluster MFS-type transporer.